Here is a 405-residue protein sequence, read N- to C-terminus: Phosphoglycerate kinase (405 aa).

Substrate contacts are provided by residues 21 to 23 (DFN), R36, 59 to 62 (HLGR), R119, and R161. Residues K212, G301, E332, and 361–364 (GGDS) contribute to the ATP site.

It belongs to the phosphoglycerate kinase family. As to quaternary structure, monomer.

It is found in the cytoplasm. The enzyme catalyses (2R)-3-phosphoglycerate + ATP = (2R)-3-phospho-glyceroyl phosphate + ADP. It functions in the pathway carbohydrate degradation; glycolysis; pyruvate from D-glyceraldehyde 3-phosphate: step 2/5. This is Phosphoglycerate kinase from Leuconostoc citreum (strain KM20).